The chain runs to 311 residues: Phosphoglycerate mutase 2 (311 aa).

Residues 16–23 (RHGQSELN), 29–30 (CG), Arg73, 126–129 (ERHY), Lys137, 153–154 (RR), and 243–244 (GS) contribute to the substrate site. The active-site Tele-phosphohistidine intermediate is His17. The active-site Proton donor/acceptor is Glu126.

Belongs to the phosphoglycerate mutase family. BPG-dependent PGAM subfamily.

The protein resides in the cytoplasm. It catalyses the reaction (2R)-2-phosphoglycerate = (2R)-3-phosphoglycerate. It functions in the pathway carbohydrate degradation; glycolysis; pyruvate from D-glyceraldehyde 3-phosphate: step 3/5. Functionally, could be non-functional. The protein is Phosphoglycerate mutase 2 (GPM2) of Saccharomyces cerevisiae (strain ATCC 204508 / S288c) (Baker's yeast).